The chain runs to 313 residues: Acetaldehyde dehydrogenase (313 aa).

Residue 13–16 (SGNI) participates in NAD(+) binding. Cys133 functions as the Acyl-thioester intermediate in the catalytic mechanism. NAD(+)-binding positions include 164–172 (SAGPGTRAN) and Asn291.

It belongs to the acetaldehyde dehydrogenase family.

It catalyses the reaction acetaldehyde + NAD(+) + CoA = acetyl-CoA + NADH + H(+). This chain is Acetaldehyde dehydrogenase, found in Cupriavidus pinatubonensis (strain JMP 134 / LMG 1197) (Cupriavidus necator (strain JMP 134)).